Consider the following 682-residue polypeptide: UvrABC system protein B (682 aa).

The region spanning 27–414 (DNIRAGVAHQ…SEGIVVEQII (388 aa)) is the Helicase ATP-binding domain. Residue 40 to 47 (GVTGSGKT) participates in ATP binding. The Beta-hairpin motif lies at 93 to 116 (YYDYYQPEAYVPTSDTYIEKDSSI). The 163-residue stretch at 432-594 (QMEDLMTECR…IEPVSVRKSL (163 aa)) folds into the Helicase C-terminal domain. The segment at 609–628 (AAKGRGKGRGRQAAPAQTAA) is disordered. Residues 642–677 (GGLIQRLEREMRESARDLEFEKAAELRDRIRMLRER) form the UVR domain.

This sequence belongs to the UvrB family. Forms a heterotetramer with UvrA during the search for lesions. Interacts with UvrC in an incision complex.

The protein localises to the cytoplasm. In terms of biological role, the UvrABC repair system catalyzes the recognition and processing of DNA lesions. A damage recognition complex composed of 2 UvrA and 2 UvrB subunits scans DNA for abnormalities. Upon binding of the UvrA(2)B(2) complex to a putative damaged site, the DNA wraps around one UvrB monomer. DNA wrap is dependent on ATP binding by UvrB and probably causes local melting of the DNA helix, facilitating insertion of UvrB beta-hairpin between the DNA strands. Then UvrB probes one DNA strand for the presence of a lesion. If a lesion is found the UvrA subunits dissociate and the UvrB-DNA preincision complex is formed. This complex is subsequently bound by UvrC and the second UvrB is released. If no lesion is found, the DNA wraps around the other UvrB subunit that will check the other stand for damage. The protein is UvrABC system protein B of Oleidesulfovibrio alaskensis (strain ATCC BAA-1058 / DSM 17464 / G20) (Desulfovibrio alaskensis).